A 75-amino-acid polypeptide reads, in one-letter code: Endogenous retrovirus group K member 5 Np9 protein (75 aa).

The interval Thr22–Lys43 is disordered. Residues Thr32–Lys43 are compositionally biased toward basic and acidic residues.

The protein resides in the nucleus. Its function is as follows. May possess a function in tumorigenesis. This is Endogenous retrovirus group K member 5 Np9 protein (ERVK-5) from Homo sapiens (Human).